The chain runs to 259 residues: 5'-nucleotidase SurE (259 aa).

Positions 8, 9, 40, and 92 each coordinate a divalent metal cation.

This sequence belongs to the SurE nucleotidase family. The cofactor is a divalent metal cation.

The protein localises to the cytoplasm. It catalyses the reaction a ribonucleoside 5'-phosphate + H2O = a ribonucleoside + phosphate. In terms of biological role, nucleotidase that shows phosphatase activity on nucleoside 5'-monophosphates. The polypeptide is 5'-nucleotidase SurE (Stenotrophomonas maltophilia (strain K279a)).